The chain runs to 1534 residues: Slit homolog 1 protein (1534 aa).

Residues 1–33 (MALTPGWGSSAGPVRPELWLLLWAAAWRLGASA) form the signal peptide. The 28-residue stretch at 34 to 61 (CPALCTCTGTTVDCHGTGLQAIPKNIPR) folds into the LRRNT domain. 6 LRR repeats span residues 62-83 (NTERLELNGNNITRIHKNDFAG), 86-107 (QLRVLQLMENQIGAVERGAFDD), 110-131 (ELERLRLNRNQLHMLPELLFQN), 134-155 (ALSRLDLSENAIQAIPRKAFRG), 158-179 (DLKNLQLDKNQISCIEEGAFRA), and 182-203 (GLEVLTLNNNNITTIPVSSFNH). Asparagine 72 carries an N-linked (GlcNAc...) asparagine glycan. A glycan (N-linked (GlcNAc...) asparagine) is linked at asparagine 192. The 51-residue stretch at 215–265 (NHLFCDCHLAWLSQWLRQRPTIGLFTQCSGPASLRGLNVAEVQKSEFSCSG) folds into the LRRCT 1 domain. The region spanning 273-309 (PTCTLSSGSCPAMCTCSNGIVDCRGKGLTAIPANLPE) is the LRRNT 2 domain. Cysteine 286 and cysteine 295 are oxidised to a cystine. LRR repeat units lie at residues 310–331 (TMTEIRLELNGIKSIPPGAFSP), 334–355 (KLRRIDLSNNQIAEIAPDAFQG), 358–379 (SLNSLVLYGNKITDLPRGVFGG), 382–403 (TLQLLLLNANKINCIRPDAFQD), and 406–427 (NLSLLSLYDNKIQSLAKGTFTS). N-linked (GlcNAc...) asparagine glycosylation is present at asparagine 406. One can recognise an LRRCT 2 domain in the interval 439–489 (NPFICDCNLKWLADFLRTNPIETSGARCASPRRLANKRIGQIKSKKFRCSA). Intrachain disulfides connect cysteine 443–cysteine 466, cysteine 445–cysteine 487, cysteine 513–cysteine 519, and cysteine 517–cysteine 526. Residues 504-540 (NSECNSDVVCPHKCRCEANVVECSSLKLTKIPERIPQ) form the LRRNT 3 domain. 5 LRR repeats span residues 541–562 (STAELRLNNNEISILEATGMFK), 566–587 (HLKKINLSNNKVSEIEDGAFEG), 590–611 (SVSELHLTANQLESIRSGMFRG), 614–635 (GLRTLMLRNNRISCIHNDSFTG), and 638–659 (NVRLLSLYDNQITTVSPGAFDT). Asparagine 571 is a glycosylation site (N-linked (GlcNAc...) asparagine). Asparagine 630 is a glycosylation site (N-linked (GlcNAc...) asparagine). One can recognise an LRRCT 3 domain in the interval 671–721 (NPFNCNCQLAWLGGWLRKRKIVTGNPRCQNPDFLRQIPLQDVAFPDFRCEE). Intrachain disulfides connect cysteine 675/cysteine 698 and cysteine 677/cysteine 719. One can recognise an LRRNT 4 domain in the interval 725 to 761 (EGGCLPRPQCPQECACLDTVVRCSNKHLRALPKGIPK). Asparagine 762, asparagine 801, and asparagine 806 each carry an N-linked (GlcNAc...) asparagine glycan. LRR repeat units lie at residues 762-783 (NVTELYLDGNQFTLVPGQLSTF), 785-806 (YLQLVDLSNNKISSLSNSSFTN), 809-830 (QLTTLILSYNALQCIPPLAFQG), and 833-854 (SLRLLSLHGNDISTLQEGIFAD). Residues 866 to 916 (NPLYCDCHLRWLSSWVKTGYKEPGIARCAGPQDMEGKLLLTTPAKKFECQG) form the LRRCT 4 domain. EGF-like domains are found at residues 927 to 962 (DLCLSSPCQNQGTCHNDPLEVYRCACPSGYKGRDCE), 964 to 1003 (SLDSCSSGPCENGGTCHAQEGEDAPFTCSCPTGFEGPTCG), 1005 to 1041 (NTDDCVDHACANGGVCVDGVGNYTCQCPLQYEGKACE), 1043 to 1081 (LVDLCSPDLNPCQHEAQCVGTPDGPRCECMPGYAGDNCS), 1083 to 1119 (NQDDCRDHRCQNGAQCMDEVNSYSCLCAEGYSGQLCE), and 1127 to 1163 (PKSPCEGTECQNGANCVDQGNRPVCQCLPGFGGPECE). Cystine bridges form between cysteine 929/cysteine 940, cysteine 934/cysteine 950, cysteine 952/cysteine 961, cysteine 968/cysteine 979, cysteine 973/cysteine 991, cysteine 993/cysteine 1002, cysteine 1009/cysteine 1020, cysteine 1014/cysteine 1029, cysteine 1031/cysteine 1040, cysteine 1047/cysteine 1060, cysteine 1054/cysteine 1069, cysteine 1071/cysteine 1080, cysteine 1087/cysteine 1098, cysteine 1092/cysteine 1107, cysteine 1109/cysteine 1118, cysteine 1131/cysteine 1142, cysteine 1136/cysteine 1151, and cysteine 1153/cysteine 1162. Asparagine 1026 carries an N-linked (GlcNAc...) asparagine glycan. Asparagine 1079 is a glycosylation site (N-linked (GlcNAc...) asparagine). The Laminin G-like domain occupies 1166–1339 (LSVNFVDRDT…QMKPGVVPGC (174 aa)). Asparagine 1189, asparagine 1259, and asparagine 1306 each carry an N-linked (GlcNAc...) asparagine glycan. Cystine bridges form between cysteine 1313–cysteine 1339, cysteine 1342–cysteine 1352, cysteine 1347–cysteine 1362, cysteine 1364–cysteine 1373, cysteine 1381–cysteine 1391, cysteine 1386–cysteine 1401, cysteine 1403–cysteine 1412, cysteine 1422–cysteine 1432, cysteine 1427–cysteine 1442, cysteine 1444–cysteine 1453, cysteine 1459–cysteine 1498, cysteine 1477–cysteine 1512, cysteine 1488–cysteine 1528, and cysteine 1492–cysteine 1530. 3 EGF-like domains span residues 1340-1374 (EPCRKLYCLHGICQPNATPGPMCHCEAGWVGLHCD), 1377-1413 (ADGPCHGHKCVHGQCVPLDALSYSCQCQDGYSGALCN), and 1418-1454 (LAEPCRGLQCLHGHCQASGTKGAHCVCDPGFSGELCE). The region spanning 1459–1534 (CRGDPVRDFH…PTKCGCALCA (76 aa)) is the CTCK domain.

As to quaternary structure, interacts with ROBO1 and GREM1. In terms of tissue distribution, predominantly expressed in adult forebrain. Expressed in fetal brain, lung and kidney.

It is found in the secreted. Functionally, thought to act as molecular guidance cue in cellular migration, and function appears to be mediated by interaction with roundabout homolog receptors. During neural development involved in axonal navigation at the ventral midline of the neural tube and projection of axons to different regions. SLIT1 and SLIT2 together seem to be essential for midline guidance in the forebrain by acting as repulsive signal preventing inappropriate midline crossing by axons projecting from the olfactory bulb. This is Slit homolog 1 protein (SLIT1) from Homo sapiens (Human).